The following is a 142-amino-acid chain: Large ribosomal subunit protein uL13 (142 aa).

The protein belongs to the universal ribosomal protein uL13 family. As to quaternary structure, part of the 50S ribosomal subunit.

Functionally, this protein is one of the early assembly proteins of the 50S ribosomal subunit, although it is not seen to bind rRNA by itself. It is important during the early stages of 50S assembly. The protein is Large ribosomal subunit protein uL13 of Delftia acidovorans (strain DSM 14801 / SPH-1).